The sequence spans 3996 residues: Probable E3 ubiquitin-protein ligase HECTD4 (3996 aa).

The helical transmembrane segment at 282–302 (TCIIRCILVVFQVVFKFFFSP) threads the bilayer. Polar residues predominate over residues 1494-1510 (PTASEPDTTLTKTSPKN). 2 disordered regions span residues 1494 to 1524 (PTAS…ESEA) and 1616 to 1637 (PETV…SICR). The residue at position 2080 (Thr-2080) is a Phosphothreonine. 4 disordered regions span residues 2219 to 2245 (FITS…DDIP), 2859 to 2919 (TSAT…PTVL), 3017 to 3053 (EDTK…STSS), and 3327 to 3403 (FDKS…QEVP). The segment covering 2232-2245 (ADDESDDDDDDDIP) has biased composition (acidic residues). Over residues 2866-2887 (LSDSSSSSSSSPGQTPQSPSLL) the composition is skewed to low complexity. Positions 2888 to 2897 (SKRKKVKMKR) are enriched in basic residues. 3 stretches are compositionally biased toward basic and acidic residues: residues 3017–3037 (EDTK…EPEK), 3327–3341 (FDKS…EQHP), and 3370–3403 (LSEK…QEVP). Residues 3627–3996 (SGGDPTYAFN…IHYREDPLSG (370 aa)) form the HECT domain. Cys-3964 serves as the catalytic Glycyl thioester intermediate.

It is found in the membrane. It carries out the reaction S-ubiquitinyl-[E2 ubiquitin-conjugating enzyme]-L-cysteine + [acceptor protein]-L-lysine = [E2 ubiquitin-conjugating enzyme]-L-cysteine + N(6)-ubiquitinyl-[acceptor protein]-L-lysine.. It participates in protein modification; protein ubiquitination. E3 ubiquitin-protein ligase which accepts ubiquitin from an E2 ubiquitin-conjugating enzyme in the form of a thioester and then directly transfers the ubiquitin to targeted substrates. The protein is Probable E3 ubiquitin-protein ligase HECTD4 (HECTD4) of Homo sapiens (Human).